The following is a 129-amino-acid chain: MARVKRAVNAQKKRRTILKASKGYRGQRSRLYRKAKEQQLHSLTYAYRDRRARKGEFRKLWIARINAAARANDITYNRFIQGLKIAGVEVDRKNLAELAVSDAAAFTALVEVAKAALPEDVNAPAGEAA.

This sequence belongs to the bacterial ribosomal protein bL20 family.

Binds directly to 23S ribosomal RNA and is necessary for the in vitro assembly process of the 50S ribosomal subunit. It is not involved in the protein synthesizing functions of that subunit. In Mycobacteroides abscessus (strain ATCC 19977 / DSM 44196 / CCUG 20993 / CIP 104536 / JCM 13569 / NCTC 13031 / TMC 1543 / L948) (Mycobacterium abscessus), this protein is Large ribosomal subunit protein bL20.